We begin with the raw amino-acid sequence, 445 residues long: DNA repair protein RadA (445 aa).

A C4-type zinc finger spans residues 10-27; it reads CSNCANISNKWSGQCFDC. 90 to 97 contributes to the ATP binding site; the sequence is GEPGIGKS. Positions 249–253 match the RadA KNRFG motif motif; sequence KNRFG. A lon-protease-like region spans residues 348-445; sequence EIYLSIAGGL…HLQELKEIIK (98 aa).

Belongs to the RecA family. RadA subfamily.

DNA-dependent ATPase involved in processing of recombination intermediates, plays a role in repairing DNA breaks. Stimulates the branch migration of RecA-mediated strand transfer reactions, allowing the 3' invading strand to extend heteroduplex DNA faster. Binds ssDNA in the presence of ADP but not other nucleotides, has ATPase activity that is stimulated by ssDNA and various branched DNA structures, but inhibited by SSB. Does not have RecA's homology-searching function. This is DNA repair protein RadA from Rickettsia prowazekii (strain Madrid E).